Consider the following 1063-residue polypeptide: Exportin-1 (1063 aa).

The Importin N-terminal domain maps to 43–109 (AQSILTTLKE…KKYVVSLIIK (67 aa)). The disordered stretch occupies residues 1034 to 1063 (AEEQSNKHQMQRNIPGMLNPHELPEDMQDE).

Belongs to the exportin family. In terms of assembly, interacts with Clbn (via its N-terminus). Associates with the nuclear pore complex via interaction with mbo and Nup214. Interacts with target proteins containing NES sequences such as actin and dl. High expression observed in the developing embryonic brain, hind gut and posterior spiracles shortly before dorsal closure; and in the ventral nerve cord, midgut and somatic musculature shortly after dorsal closure. Expression increases when the tissue is well developed.

The protein resides in the nucleus. It is found in the nucleus membrane. Receptor for the leucine-rich nuclear export signal (NES). Binds cooperatively to the NES on its target protein and to the small GTPase Ran in its active GTP-bound form. Involved in the export of dl, RpS2 and the pre-40S ribosome from the nucleus to the cytoplasm. Plays an important role in nuclear pore assembly by mediating nucleoporin condensation and biogenesis of annulate lamellae. Required for the function or maintenance of certain tissues such as brain and gut. The chain is Exportin-1 from Drosophila melanogaster (Fruit fly).